Consider the following 365-residue polypeptide: Cobalt-precorrin-5B C(1)-methyltransferase (365 aa).

Belongs to the CbiD family.

The enzyme catalyses Co-precorrin-5B + S-adenosyl-L-methionine = Co-precorrin-6A + S-adenosyl-L-homocysteine. It functions in the pathway cofactor biosynthesis; adenosylcobalamin biosynthesis; cob(II)yrinate a,c-diamide from sirohydrochlorin (anaerobic route): step 6/10. Catalyzes the methylation of C-1 in cobalt-precorrin-5B to form cobalt-precorrin-6A. This chain is Cobalt-precorrin-5B C(1)-methyltransferase, found in Clostridium perfringens (strain 13 / Type A).